Here is a 201-residue protein sequence, read N- to C-terminus: Recombination protein RecR (201 aa).

A C4-type zinc finger spans residues 57 to 72 (CKLCQIYTEQPLCNIC). Residues 80-175 (TLLCVVESPA…KCSRIAHGVP (96 aa)) form the Toprim domain.

This sequence belongs to the RecR family.

Its function is as follows. May play a role in DNA repair. It seems to be involved in an RecBC-independent recombinational process of DNA repair. It may act with RecF and RecO. In Coxiella burnetii (strain RSA 493 / Nine Mile phase I), this protein is Recombination protein RecR.